The primary structure comprises 513 residues: Anthranilate synthase component 1 (513 aa).

L-tryptophan contacts are provided by residues serine 50 and 279–281 (PYM). 314–315 (GT) contacts chorismate. Glutamate 341 provides a ligand contact to Mg(2+). Chorismate-binding positions include tyrosine 429, arginine 449, 463–465 (GAG), and glycine 465. Glutamate 478 serves as a coordination point for Mg(2+).

Belongs to the anthranilate synthase component I family. In terms of assembly, heterotetramer consisting of two non-identical subunits: a beta subunit (TrpG) and a large alpha subunit (TrpE). Requires Mg(2+) as cofactor.

It catalyses the reaction chorismate + L-glutamine = anthranilate + pyruvate + L-glutamate + H(+). Its pathway is amino-acid biosynthesis; L-tryptophan biosynthesis; L-tryptophan from chorismate: step 1/5. Feedback inhibited by tryptophan. Its function is as follows. Part of a heterotetrameric complex that catalyzes the two-step biosynthesis of anthranilate, an intermediate in the biosynthesis of L-tryptophan. In the first step, the glutamine-binding beta subunit (TrpG) of anthranilate synthase (AS) provides the glutamine amidotransferase activity which generates ammonia as a substrate that, along with chorismate, is used in the second step, catalyzed by the large alpha subunit of AS (TrpE) to produce anthranilate. In the absence of TrpG, TrpE can synthesize anthranilate directly from chorismate and high concentrations of ammonia. This is Anthranilate synthase component 1 (trpE) from Bacillus pumilus (Bacillus mesentericus).